Here is a 544-residue protein sequence, read N- to C-terminus: Chaperonin GroEL (544 aa).

Residues 30–33, Lys-51, 87–91, Gly-415, 478–480, and Asp-494 contribute to the ATP site; these read TLGP, DGTTT, and NAA.

The protein belongs to the chaperonin (HSP60) family. In terms of assembly, forms a cylinder of 14 subunits composed of two heptameric rings stacked back-to-back. Interacts with the co-chaperonin GroES.

It localises to the cytoplasm. The enzyme catalyses ATP + H2O + a folded polypeptide = ADP + phosphate + an unfolded polypeptide.. In terms of biological role, together with its co-chaperonin GroES, plays an essential role in assisting protein folding. The GroEL-GroES system forms a nano-cage that allows encapsulation of the non-native substrate proteins and provides a physical environment optimized to promote and accelerate protein folding. This is Chaperonin GroEL from Geobacter sulfurreducens (strain ATCC 51573 / DSM 12127 / PCA).